The sequence spans 499 residues: Glycerol kinase (499 aa).

Position 13 (threonine 13) interacts with ADP. ATP contacts are provided by threonine 13, threonine 14, and serine 15. Threonine 13 is a sn-glycerol 3-phosphate binding site. Position 17 (arginine 17) interacts with ADP. 4 residues coordinate sn-glycerol 3-phosphate: arginine 83, glutamate 84, tyrosine 135, and aspartate 245. Positions 83, 84, 135, 245, and 246 each coordinate glycerol. ADP contacts are provided by threonine 267 and glycine 310. ATP is bound by residues threonine 267, glycine 310, glutamine 314, and glycine 411. Positions 411 and 415 each coordinate ADP.

It belongs to the FGGY kinase family.

The enzyme catalyses glycerol + ATP = sn-glycerol 3-phosphate + ADP + H(+). The protein operates within polyol metabolism; glycerol degradation via glycerol kinase pathway; sn-glycerol 3-phosphate from glycerol: step 1/1. Its activity is regulated as follows. Inhibited by fructose 1,6-bisphosphate (FBP). Functionally, key enzyme in the regulation of glycerol uptake and metabolism. Catalyzes the phosphorylation of glycerol to yield sn-glycerol 3-phosphate. This chain is Glycerol kinase, found in Stenotrophomonas maltophilia (strain R551-3).